We begin with the raw amino-acid sequence, 106 residues long: DNA-directed RNA polymerase subunit omega (106 aa).

Residues 76–106 (REPAREAAEPAGEAPEEQQRAAGEREDQGAA) are disordered. Positions 92 to 106 (EQQRAAGEREDQGAA) are enriched in basic and acidic residues.

It belongs to the RNA polymerase subunit omega family. As to quaternary structure, the RNAP catalytic core consists of 2 alpha, 1 beta, 1 beta' and 1 omega subunit. When a sigma factor is associated with the core the holoenzyme is formed, which can initiate transcription.

It carries out the reaction RNA(n) + a ribonucleoside 5'-triphosphate = RNA(n+1) + diphosphate. Promotes RNA polymerase assembly. Latches the N- and C-terminal regions of the beta' subunit thereby facilitating its interaction with the beta and alpha subunits. This is DNA-directed RNA polymerase subunit omega from Rubrobacter xylanophilus (strain DSM 9941 / JCM 11954 / NBRC 16129 / PRD-1).